The chain runs to 386 residues: N-acetylneuraminate epimerase (386 aa).

A signal peptide spans 1-29 (MGMQMKNFKKMMTLMALCLSVAITTSGYA). Kelch repeat units lie at residues 51–95 (VIYV…VFLN), 97–149 (ELYV…VKLN), 151–186 (TMVL…KVIY), 187–232 (NYFN…VMEN), 235–284 (LMLI…LAGA), 306–355 (QNYT…SYGD), and 357–386 (VFLI…LLIK). The active-site Proton acceptor is Glu-241.

This sequence belongs to the NanM family. Homodimer.

It localises to the periplasm. It catalyses the reaction N-acetyl-alpha-neuraminate = N-acetyl-beta-neuraminate. Its function is as follows. Converts alpha-N-acetylneuranimic acid (Neu5Ac) to the beta-anomer, accelerating the equilibrium between the alpha- and beta-anomers. Probably facilitates sialidase-negative bacteria to compete successfully for limited amounts of extracellular Neu5Ac, which is likely taken up in the beta-anomer. In addition, the rapid removal of sialic acid from solution might be advantageous to the bacterium to damp down host responses. This is N-acetylneuraminate epimerase from Salmonella choleraesuis (strain SC-B67).